The chain runs to 116 residues: Large ribosomal subunit protein uL22 (116 aa).

It belongs to the universal ribosomal protein uL22 family. As to quaternary structure, part of the 50S ribosomal subunit.

Its function is as follows. This protein binds specifically to 23S rRNA; its binding is stimulated by other ribosomal proteins, e.g. L4, L17, and L20. It is important during the early stages of 50S assembly. It makes multiple contacts with different domains of the 23S rRNA in the assembled 50S subunit and ribosome. The globular domain of the protein is located near the polypeptide exit tunnel on the outside of the subunit, while an extended beta-hairpin is found that lines the wall of the exit tunnel in the center of the 70S ribosome. The polypeptide is Large ribosomal subunit protein uL22 (Leptospira biflexa serovar Patoc (strain Patoc 1 / Ames)).